The chain runs to 205 residues: Large ribosomal subunit protein uL3 (205 aa).

Belongs to the universal ribosomal protein uL3 family. As to quaternary structure, part of the 50S ribosomal subunit. Forms a cluster with proteins L14 and L19.

Its function is as follows. One of the primary rRNA binding proteins, it binds directly near the 3'-end of the 23S rRNA, where it nucleates assembly of the 50S subunit. This Porphyromonas gingivalis (strain ATCC 33277 / DSM 20709 / CIP 103683 / JCM 12257 / NCTC 11834 / 2561) protein is Large ribosomal subunit protein uL3.